The primary structure comprises 638 residues: 1-deoxy-D-xylulose-5-phosphate synthase (638 aa).

Thiamine diphosphate-binding positions include histidine 75 and 116–118; that span reads AHS. Aspartate 147 lines the Mg(2+) pocket. Thiamine diphosphate is bound by residues 148–149, asparagine 177, tyrosine 288, and glutamate 370; that span reads GA. Residue asparagine 177 participates in Mg(2+) binding.

Belongs to the transketolase family. DXPS subfamily. As to quaternary structure, homodimer. It depends on Mg(2+) as a cofactor. The cofactor is thiamine diphosphate.

It catalyses the reaction D-glyceraldehyde 3-phosphate + pyruvate + H(+) = 1-deoxy-D-xylulose 5-phosphate + CO2. It participates in metabolic intermediate biosynthesis; 1-deoxy-D-xylulose 5-phosphate biosynthesis; 1-deoxy-D-xylulose 5-phosphate from D-glyceraldehyde 3-phosphate and pyruvate: step 1/1. Functionally, catalyzes the acyloin condensation reaction between C atoms 2 and 3 of pyruvate and glyceraldehyde 3-phosphate to yield 1-deoxy-D-xylulose-5-phosphate (DXP). The sequence is that of 1-deoxy-D-xylulose-5-phosphate synthase from Cupriavidus pinatubonensis (strain JMP 134 / LMG 1197) (Cupriavidus necator (strain JMP 134)).